The primary structure comprises 175 residues: Nicotinamide-nucleotide adenylyltransferase 1 (175 aa).

This sequence belongs to the archaeal NMN adenylyltransferase family.

It is found in the cytoplasm. The catalysed reaction is beta-nicotinamide D-ribonucleotide + ATP + H(+) = diphosphate + NAD(+). The protein operates within cofactor biosynthesis; NAD(+) biosynthesis; NAD(+) from nicotinamide D-ribonucleotide: step 1/1. The polypeptide is Nicotinamide-nucleotide adenylyltransferase 1 (Sulfolobus acidocaldarius (strain ATCC 33909 / DSM 639 / JCM 8929 / NBRC 15157 / NCIMB 11770)).